The following is a 342-amino-acid chain: Tetraacyldisaccharide 4'-kinase (342 aa).

68–75 (TVGGTGKT) contributes to the ATP binding site.

This sequence belongs to the LpxK family.

It carries out the reaction a lipid A disaccharide + ATP = a lipid IVA + ADP + H(+). Its pathway is glycolipid biosynthesis; lipid IV(A) biosynthesis; lipid IV(A) from (3R)-3-hydroxytetradecanoyl-[acyl-carrier-protein] and UDP-N-acetyl-alpha-D-glucosamine: step 6/6. Transfers the gamma-phosphate of ATP to the 4'-position of a tetraacyldisaccharide 1-phosphate intermediate (termed DS-1-P) to form tetraacyldisaccharide 1,4'-bis-phosphate (lipid IVA). The protein is Tetraacyldisaccharide 4'-kinase of Burkholderia ambifaria (strain ATCC BAA-244 / DSM 16087 / CCUG 44356 / LMG 19182 / AMMD) (Burkholderia cepacia (strain AMMD)).